We begin with the raw amino-acid sequence, 346 residues long: D-fructose 1,6-bisphosphatase class 2/sedoheptulose 1,7-bisphosphatase (346 aa).

Residues Asp33, Glu57, Asp97, and Glu100 each coordinate Mn(2+). Residues 100 to 102, Tyr131, 176 to 178, and 198 to 200 each bind substrate; these read EGT, RDR, and DGD. A Mn(2+)-binding site is contributed by Glu225.

The protein belongs to the FBPase class 2 family. Homotetramer. Mn(2+) is required as a cofactor.

It carries out the reaction beta-D-fructose 1,6-bisphosphate + H2O = beta-D-fructose 6-phosphate + phosphate. The catalysed reaction is D-sedoheptulose 1,7-bisphosphate + H2O = D-sedoheptulose 7-phosphate + phosphate. It functions in the pathway carbohydrate biosynthesis; Calvin cycle. Functionally, catalyzes the hydrolysis of fructose 1,6-bisphosphate (Fru 1,6-P2) and sedoheptulose 1,7-bisphosphate (Sed 1,7-P2) to fructose 6-phosphate and sedoheptulose 7-phosphate, respectively. In Gloeobacter violaceus (strain ATCC 29082 / PCC 7421), this protein is D-fructose 1,6-bisphosphatase class 2/sedoheptulose 1,7-bisphosphatase.